Reading from the N-terminus, the 105-residue chain is Replication restart protein PriB (105 aa).

The SSB domain maps to 1–102 (MTANRLTLSG…LHAEQIELID (102 aa)).

The protein belongs to the PriB family. Homodimer. Interacts with PriA and DnaT. Component of the replication restart primosome. Primosome assembly occurs via a 'hand-off' mechanism. PriA binds to replication forks, subsequently PriB then DnaT bind; DnaT then displaces ssDNA to generate the helicase loading substrate.

Its function is as follows. Involved in the restart of stalled replication forks, which reloads the replicative helicase on sites other than the origin of replication; the PriA-PriB pathway is the major replication restart pathway. During primosome assembly it facilitates complex formation between PriA and DnaT on DNA; stabilizes PriA on DNA. Stimulates the DNA unwinding activity of PriA helicase. The protein is Replication restart protein PriB of Serratia proteamaculans (strain 568).